Consider the following 100-residue polypeptide: Small ribosomal subunit protein uS14c (100 aa).

The segment covering 28–45 (KKEIKKVPSLSEKMEIHG) has biased composition (basic and acidic residues). The tract at residues 28–59 (KKEIKKVPSLSEKMEIHGKLQSPPRNSAPTRL) is disordered.

The protein belongs to the universal ribosomal protein uS14 family. Part of the 30S ribosomal subunit.

Its subcellular location is the plastid. The protein resides in the chloroplast. Functionally, binds 16S rRNA, required for the assembly of 30S particles. This is Small ribosomal subunit protein uS14c from Nandina domestica (Heavenly bamboo).